The primary structure comprises 610 residues: UvrABC system protein C (610 aa).

A GIY-YIG domain is found at 16–94 (SQPGVYRMYD…IKLYQPRYNV (79 aa)). The UVR domain occupies 204–239 (DQVLTQLIARMEKASQDLAFEEAARIRDQIQAVRRV).

It belongs to the UvrC family. In terms of assembly, interacts with UvrB in an incision complex.

The protein resides in the cytoplasm. The UvrABC repair system catalyzes the recognition and processing of DNA lesions. UvrC both incises the 5' and 3' sides of the lesion. The N-terminal half is responsible for the 3' incision and the C-terminal half is responsible for the 5' incision. The polypeptide is UvrABC system protein C (Salmonella heidelberg (strain SL476)).